A 131-amino-acid chain; its full sequence is uncharacterized protein (131 aa).

The first 26 residues, 1-26 (MKKIVAAIVVIGLVFIAFFYLYSRSG), serve as a signal peptide directing secretion.

This is an uncharacterized protein from Bacillus subtilis (strain 168).